A 418-amino-acid chain; its full sequence is S-adenosylmethionine synthase (418 aa).

His-16 serves as a coordination point for ATP. Asp-18 is a binding site for Mg(2+). Residue Glu-44 coordinates K(+). Glu-57 and Gln-100 together coordinate L-methionine. Residues 100–110 (QSPDIAQGVDS) form a flexible loop region. Residues 174–176 (DGK), Asp-259, 265–266 (RK), Ala-282, and Lys-286 each bind ATP. Position 259 (Asp-259) interacts with L-methionine. Lys-290 is a binding site for L-methionine.

The protein belongs to the AdoMet synthase family. As to quaternary structure, homotetramer; dimer of dimers. Requires Mg(2+) as cofactor. The cofactor is K(+).

The protein resides in the cytoplasm. It carries out the reaction L-methionine + ATP + H2O = S-adenosyl-L-methionine + phosphate + diphosphate. It participates in amino-acid biosynthesis; S-adenosyl-L-methionine biosynthesis; S-adenosyl-L-methionine from L-methionine: step 1/1. Its function is as follows. Catalyzes the formation of S-adenosylmethionine (AdoMet) from methionine and ATP. The overall synthetic reaction is composed of two sequential steps, AdoMet formation and the subsequent tripolyphosphate hydrolysis which occurs prior to release of AdoMet from the enzyme. The protein is S-adenosylmethionine synthase of Acaryochloris marina (strain MBIC 11017).